A 401-amino-acid chain; its full sequence is Inactive leucine-rich repeat receptor-like protein kinase CORYNE (401 aa).

Residues M1–S33 form the signal peptide. The Extracellular segment spans residues T34 to V62. Residues I63 to F83 traverse the membrane as a helical segment. The Cytoplasmic segment spans residues L84 to F401. The region spanning S118–F401 is the Protein kinase domain. ATP-binding positions include L124–Y132 and K146.

This sequence belongs to the protein kinase superfamily. Ser/Thr protein kinase family. As to quaternary structure, self-interacts. Parts of a tetrameric complex made of two CLV2/CRN heterodimers that can interact with CLV3 and CLE peptides. CLV2/CRN heterodimer interacts with CLV1 homodimers. Interacts with CLV1 and CLV2. CLV2/CRN heterodimer can interact with BAM3. In terms of tissue distribution, present in roots, stems, leaves, inflorescence, flowers and siliques. Mostly expressed in shoot tips and, to a lesser extent, in young organs and roots. Also expressed in the inner tissues of the proximal root meristem. Expressed in the vascular cylinder of root tips, mostly in phloem poles.

Its subcellular location is the cell membrane. The protein resides in the endoplasmic reticulum membrane. In terms of biological role, involved in the perception of CLV3 and CLV3-like (CLE) peptides, that act as extracellular signals regulating meristem maintenance. Modulates root, shoot and flower apical meristem maintenance and floral organ development regulation, probably via CLAVATA (CLV)-like pathways involving at least CLV3 and CLE19. In complex with CLV2, perceives secreted CLV3-like effector proteins from plant-parasitic cyst nematodes as ligand mimics of the plant CLE signaling pathway. This recognition is required for proper feeding structure (syncytium) development and ultimately successful nematode infection. CLE14 perception by CLV2/CRN complex triggers root meristem differentiation. Required for the sensing of the root CLE peptides (e.g. CLE8, CLE9/CLE10, CLE11, CLE13, CLE14, CLE16, CLE17, CLE18, CLE20, CLE21, CLE25, CLE26, CLE40, CLE41/CLE44 and CLE45), which also involves CLV2 and leads to root growth regulation, mostly in the phloem and protophloem. Promotes the accumulation of BAM3, especially at later stages of protophloem development. The chain is Inactive leucine-rich repeat receptor-like protein kinase CORYNE from Arabidopsis thaliana (Mouse-ear cress).